The primary structure comprises 878 residues: Vacuolar membrane protease (878 aa).

Topologically, residues 1–16 (MASLRLPRANPLAFTR) are cytoplasmic. The helical transmembrane segment at 17–37 (WPVTVITAIVYLALLIPLLVV) threads the bilayer. At 38 to 390 (HHVVPSAPSS…STFVLFQLHT (353 aa)) the chain is on the vacuolar side. Residues N53 and N119 are each glycosylated (N-linked (GlcNAc...) asparagine). 2 residues coordinate Zn(2+): H174 and D186. E220 functions as the Proton acceptor in the catalytic mechanism. Zn(2+)-binding residues include E221, E246, and H319. A helical transmembrane segment spans residues 391 to 411 (LFALLVTLLIVGPLTLLFTSI). Topologically, residues 412-442 (ALTKADKMYLFRSSAKSEDRLDVVPLQGLRG) are cytoplasmic. Residues 443–463 (FFRFPFLFGIPTVVTVGLAYL) traverse the membrane as a helical segment. Residues 464–473 (VTKVNPYIIH) are Vacuolar-facing. Residues 474-494 (SSAYAVWSMMVAAWVFLAWFV) form a helical membrane-spanning segment. Over 495-508 (SRVADFARPSAFHR) the chain is Cytoplasmic. A helical membrane pass occupies residues 509–529 (IYTLTWMYVLSWVSAVIATVY). Residues 530-533 (ANQR) are Vacuolar-facing. The chain crosses the membrane as a helical span at residues 534–554 (GLAGGYFIFFFHAGIFLATWI). Topologically, residues 555–659 (SYLELFALPS…ALPKWTWGLQ (105 aa)) are cytoplasmic. The span at 577–590 (GRASGHGSRRGTTS) shows a compositional bias: low complexity. Residues 577 to 611 (GRASGHGSRRGTTSGEDDGEEAEEEPTESTSLLGS) are disordered. Positions 591–603 (GEDDGEEAEEEPT) are enriched in acidic residues. Residues 660-680 (LLLTAPITLIMVGPLALLTIS) form a helical membrane-spanning segment. At 681-693 (AISQTGQDGGHPL) the chain is on the vacuolar side. Residues 694-714 (FAYVAIAIFTTIMLTPLLPFI) traverse the membrane as a helical segment. Residues 715–721 (HRYTYHV) are Cytoplasmic-facing. A helical transmembrane segment spans residues 722–742 (PLFLLAVFLGTLIYNLVAFPF). The Vacuolar segment spans residues 743–878 (SDSNRLKLYY…RRAFEIGNDD (136 aa)).

It belongs to the peptidase M28 family. Requires Zn(2+) as cofactor.

The protein resides in the vacuole membrane. Functionally, may be involved in vacuolar sorting and osmoregulation. The protein is Vacuolar membrane protease of Aspergillus flavus (strain ATCC 200026 / FGSC A1120 / IAM 13836 / NRRL 3357 / JCM 12722 / SRRC 167).